The following is a 177-amino-acid chain: Retrograde regulation protein 1 (177 aa).

The interval 1-24 is disordered; it reads MSSIPAGTDPGSCGANFKNDRKRR. A bHLH domain is found at 11–96; the sequence is GSCGANFKND…TQAVEYISHL (86 aa). Phosphoserine is present on residues serine 50 and serine 52. Disordered stretches follow at residues 52–82 and 147–177; these read SNDTLSESTPGALGLSSKAKGTGTKDGKPNK and LAATNDDSVRPPAKRLSSFEYGGYGEYGNGS. Position 60 is a phosphothreonine (threonine 60). A compositionally biased stretch (gly residues) spans 168 to 177; the sequence is GGYGEYGNGS.

In terms of assembly, binds DNA as a heterodimer with RTG3.

Its subcellular location is the nucleus. Its function is as follows. Required for a novel path of interorganelle communication between mitochondria, peroxisomes and the nucleus, thereby maintaining a functional metabolic interaction between the tricarboxylic acid and glyoxylate cycles. Transcription factor that regulates CIT2 gene expression. Binds to two identical sites oriented as inverted repeats 28 bp apart in a regulatory upstream activation sequence element (UASR) in the CIT2 promoter. The core binding site is 5'-GGTCAC-3'. In Saccharomyces cerevisiae (strain ATCC 204508 / S288c) (Baker's yeast), this protein is Retrograde regulation protein 1 (RTG1).